The chain runs to 82 residues: Sec-independent protein translocase protein TatA (82 aa).

A helical transmembrane segment spans residues Met-1–Gly-21. A disordered region spans residues Ala-42–Thr-82. Basic and acidic residues predominate over residues Ser-63 to Thr-82.

The protein belongs to the TatA/E family. As to quaternary structure, the Tat system comprises two distinct complexes: a TatABC complex, containing multiple copies of TatA, TatB and TatC subunits, and a separate TatA complex, containing only TatA subunits. Substrates initially bind to the TatABC complex, which probably triggers association of the separate TatA complex to form the active translocon.

It localises to the cell inner membrane. Functionally, part of the twin-arginine translocation (Tat) system that transports large folded proteins containing a characteristic twin-arginine motif in their signal peptide across membranes. TatA could form the protein-conducting channel of the Tat system. This is Sec-independent protein translocase protein TatA from Helicobacter hepaticus (strain ATCC 51449 / 3B1).